Consider the following 746-residue polypeptide: 4-hydroxy-3-methylbut-2-en-1-yl diphosphate synthase (flavodoxin) (746 aa).

4 residues coordinate [4Fe-4S] cluster: Cys-653, Cys-656, Cys-687, and Glu-694.

Belongs to the IspG family. It depends on [4Fe-4S] cluster as a cofactor.

It carries out the reaction (2E)-4-hydroxy-3-methylbut-2-enyl diphosphate + oxidized [flavodoxin] + H2O + 2 H(+) = 2-C-methyl-D-erythritol 2,4-cyclic diphosphate + reduced [flavodoxin]. It participates in isoprenoid biosynthesis; isopentenyl diphosphate biosynthesis via DXP pathway; isopentenyl diphosphate from 1-deoxy-D-xylulose 5-phosphate: step 5/6. Functionally, converts 2C-methyl-D-erythritol 2,4-cyclodiphosphate (ME-2,4cPP) into 1-hydroxy-2-methyl-2-(E)-butenyl 4-diphosphate. The polypeptide is 4-hydroxy-3-methylbut-2-en-1-yl diphosphate synthase (flavodoxin) (Chlorobaculum tepidum (strain ATCC 49652 / DSM 12025 / NBRC 103806 / TLS) (Chlorobium tepidum)).